The chain runs to 62 residues: Large ribosomal subunit protein uL29 (62 aa).

The protein belongs to the universal ribosomal protein uL29 family.

In Geobacter sulfurreducens (strain ATCC 51573 / DSM 12127 / PCA), this protein is Large ribosomal subunit protein uL29.